We begin with the raw amino-acid sequence, 268 residues long: Tryptophan synthase alpha chain (268 aa).

Residues Glu49 and Asp60 each act as proton acceptor in the active site.

The protein belongs to the TrpA family. In terms of assembly, tetramer of two alpha and two beta chains.

It carries out the reaction (1S,2R)-1-C-(indol-3-yl)glycerol 3-phosphate + L-serine = D-glyceraldehyde 3-phosphate + L-tryptophan + H2O. Its pathway is amino-acid biosynthesis; L-tryptophan biosynthesis; L-tryptophan from chorismate: step 5/5. In terms of biological role, the alpha subunit is responsible for the aldol cleavage of indoleglycerol phosphate to indole and glyceraldehyde 3-phosphate. The protein is Tryptophan synthase alpha chain of Xylella fastidiosa (strain 9a5c).